A 517-amino-acid polypeptide reads, in one-letter code: Crotonobetaine/carnitine--CoA ligase (517 aa).

It belongs to the ATP-dependent AMP-binding enzyme family.

The enzyme catalyses 4-(trimethylamino)butanoate + ATP + CoA = 4-(trimethylamino)butanoyl-CoA + AMP + diphosphate. It carries out the reaction crotonobetaine + ATP + CoA = crotonobetainyl-CoA + AMP + diphosphate. It catalyses the reaction (R)-carnitine + ATP + CoA = (R)-carnitinyl-CoA + AMP + diphosphate. It functions in the pathway amine and polyamine metabolism; carnitine metabolism. Catalyzes the transfer of CoA to carnitine, generating the initial carnitinyl-CoA needed for the CaiB reaction cycle. Also has activity toward crotonobetaine and gamma-butyrobetaine. The polypeptide is Crotonobetaine/carnitine--CoA ligase (Escherichia coli O17:K52:H18 (strain UMN026 / ExPEC)).